Consider the following 366-residue polypeptide: tRNA(Met) cytidine acetate ligase (366 aa).

Residues 7 to 20 (VAEF…HKYL), Gly96, Asn152, and Arg175 contribute to the ATP site.

The protein belongs to the TmcAL family.

It is found in the cytoplasm. The enzyme catalyses cytidine(34) in elongator tRNA(Met) + acetate + ATP = N(4)-acetylcytidine(34) in elongator tRNA(Met) + AMP + diphosphate. In terms of biological role, catalyzes the formation of N(4)-acetylcytidine (ac(4)C) at the wobble position of elongator tRNA(Met), using acetate and ATP as substrates. First activates an acetate ion to form acetyladenylate (Ac-AMP) and then transfers the acetyl group to tRNA to form ac(4)C34. This is tRNA(Met) cytidine acetate ligase from Streptococcus uberis (strain ATCC BAA-854 / 0140J).